We begin with the raw amino-acid sequence, 64 residues long: Phylloxin-S1 (64 aa).

An N-terminal signal peptide occupies residues M1 to C22. The propeptide occupies E23–R44. Q63 bears the Glutamine amide mark.

In terms of tissue distribution, expressed by the skin glands.

It localises to the secreted. Functionally, antimicrobial peptide against both Gram-positive and Gram-negative bacteria. This chain is Phylloxin-S1, found in Phyllomedusa sauvagei (Sauvage's leaf frog).